The following is a 466-amino-acid chain: 3-isopropylmalate dehydratase large subunit (466 aa).

Residues C347, C407, and C410 each coordinate [4Fe-4S] cluster.

Belongs to the aconitase/IPM isomerase family. LeuC type 1 subfamily. As to quaternary structure, heterodimer of LeuC and LeuD. The cofactor is [4Fe-4S] cluster.

The enzyme catalyses (2R,3S)-3-isopropylmalate = (2S)-2-isopropylmalate. Its pathway is amino-acid biosynthesis; L-leucine biosynthesis; L-leucine from 3-methyl-2-oxobutanoate: step 2/4. Functionally, catalyzes the isomerization between 2-isopropylmalate and 3-isopropylmalate, via the formation of 2-isopropylmaleate. This is 3-isopropylmalate dehydratase large subunit from Shigella flexneri serotype 5b (strain 8401).